Consider the following 573-residue polypeptide: Threonine--tRNA ligase (573 aa).

Positions 174 to 474 (DHRRINKILE…LLEQTKGALD (301 aa)) are catalytic. Zn(2+)-binding residues include C268, H319, and H451.

The protein belongs to the class-II aminoacyl-tRNA synthetase family. As to quaternary structure, homodimer. Zn(2+) is required as a cofactor.

The protein resides in the cytoplasm. It carries out the reaction tRNA(Thr) + L-threonine + ATP = L-threonyl-tRNA(Thr) + AMP + diphosphate + H(+). Its function is as follows. Catalyzes the attachment of threonine to tRNA(Thr) in a two-step reaction: L-threonine is first activated by ATP to form Thr-AMP and then transferred to the acceptor end of tRNA(Thr). Also edits incorrectly charged L-seryl-tRNA(Thr). The sequence is that of Threonine--tRNA ligase from Mycoplasmoides gallisepticum (strain R(low / passage 15 / clone 2)) (Mycoplasma gallisepticum).